A 90-amino-acid chain; its full sequence is Probable Fe(2+)-trafficking protein (90 aa).

Belongs to the Fe(2+)-trafficking protein family. As to quaternary structure, monomer.

Functionally, could be a mediator in iron transactions between iron acquisition and iron-requiring processes, such as synthesis and/or repair of Fe-S clusters in biosynthetic enzymes. The protein is Probable Fe(2+)-trafficking protein of Yersinia pseudotuberculosis serotype O:1b (strain IP 31758).